Reading from the N-terminus, the 479-residue chain is Flavonol 3-O-glucosyltransferase UGT71C4 (479 aa).

The active-site Proton acceptor is His17. Residue His17 participates in an anthocyanidin binding. The Charge relay role is filled by Asp127. UDP-alpha-D-glucose-binding residues include Thr150, Ala350, Gln352, His367, Trp370, Asn371, Ser372, and Glu375. Ala390 contacts an anthocyanidin. UDP-alpha-D-glucose-binding residues include Glu391 and Gln392.

This sequence belongs to the UDP-glycosyltransferase family.

It carries out the reaction a flavonol + UDP-alpha-D-glucose = a flavonol 3-O-beta-D-glucoside + UDP + H(+). The enzyme catalyses a 7-O-hydroxy-flavonol + UDP-alpha-D-glucose = a flavonol 7-O-beta-D-glucoside + UDP + H(+). In terms of biological role, possesses quercetin 3-O-glucosyltransferase and 7-O-glucosyltransferase activities in vitro. Also active in vitro on benzoates and benzoate derivatives. The sequence is that of Flavonol 3-O-glucosyltransferase UGT71C4 from Arabidopsis thaliana (Mouse-ear cress).